Here is a 362-residue protein sequence, read N- to C-terminus: B3 domain-containing protein IDEF1 (362 aa).

The segment at 30 to 91 (VPFPNPFPAP…TPTPTPRGFA (62 aa)) is disordered. The span at 48 to 70 (PHNHNHNHNHNHNIHNSHNHNHN) shows a compositional bias: basic residues. The TF-B3 DNA-binding region spans 253 to 355 (LRKELTKSDV…KFIIRGEKAI (103 aa)).

In terms of processing, polyubiquitinated. Ubiquitination leads to its subsequent degradation via the proteasome pathway. Expressed in roots.

It localises to the nucleus. Transcription regulator involved in iron deficiency response and tolerance. May regulate directly iron transporters or other transcription factors involved in iron-deficiency response. Binds specifically to the DNA sequence 5'-CATGC-3' of the IDE1 element found in the promoter of the barley iron deficiency-inducible gene IDS2. In Oryza sativa subsp. japonica (Rice), this protein is B3 domain-containing protein IDEF1 (IDEF1).